Here is a 359-residue protein sequence, read N- to C-terminus: Alanine racemase (359 aa).

Catalysis depends on Lys-35, which acts as the Proton acceptor; specific for D-alanine. Position 35 is an N6-(pyridoxal phosphate)lysine (Lys-35). Arg-130 is a binding site for substrate. Catalysis depends on Tyr-255, which acts as the Proton acceptor; specific for L-alanine. A substrate-binding site is contributed by Met-303.

The protein belongs to the alanine racemase family. Requires pyridoxal 5'-phosphate as cofactor.

The catalysed reaction is L-alanine = D-alanine. The protein operates within amino-acid biosynthesis; D-alanine biosynthesis; D-alanine from L-alanine: step 1/1. Its function is as follows. Catalyzes the interconversion of L-alanine and D-alanine. May also act on other amino acids. This is Alanine racemase (alr) from Janthinobacterium sp. (strain Marseille) (Minibacterium massiliensis).